The primary structure comprises 397 residues: F-box protein At4g11590 (397 aa).

One can recognise an F-box domain in the interval Glu-24–Phe-70.

Part of a SCF (ASK-cullin-F-box) protein ligase complex. Interacts with ASK16.

The protein localises to the nucleus. Its pathway is protein modification; protein ubiquitination. Its function is as follows. Component of SCF(ASK-cullin-F-box) E3 ubiquitin ligase complexes, which may mediate the ubiquitination and subsequent proteasomal degradation of target proteins. The chain is F-box protein At4g11590 from Arabidopsis thaliana (Mouse-ear cress).